A 136-amino-acid polypeptide reads, in one-letter code: Small ribosomal subunit protein eS6 (136 aa).

It belongs to the eukaryotic ribosomal protein eS6 family.

This chain is Small ribosomal subunit protein eS6, found in Methanosarcina acetivorans (strain ATCC 35395 / DSM 2834 / JCM 12185 / C2A).